A 1039-amino-acid chain; its full sequence is Alpha-mannosidase 2C1 (1039 aa).

Co(2+) contacts are provided by histidine 259, aspartate 261, aspartate 371, and histidine 576. Aspartate 371 serves as the catalytic Nucleophile.

Belongs to the glycosyl hydrolase 38 family. Requires Co(2+) as cofactor. In terms of tissue distribution, expressed in kidney and liver (at protein level). Widely expressed, with highest levels in lung, ovary and testis. Also detected at lower levels in heart, brain, liver, spleen, kidney and thymus.

The protein localises to the cytoplasm. The enzyme catalyses Hydrolysis of terminal, non-reducing alpha-D-mannose residues in alpha-D-mannosides.. Inhibited by 1,4-dideoxy-1,4-imino-d-mannitol (DIM) and EDTA. Its function is as follows. Cleaves alpha 1,2-, alpha 1,3-, and alpha 1,6-linked mannose residues from glycoproteins. Involved in the degradation of free oligosaccharides in the cytoplasm. This chain is Alpha-mannosidase 2C1, found in Mus musculus (Mouse).